The following is an 847-amino-acid chain: Follistatin-related protein 5 (847 aa).

A signal peptide spans 1–20 (MFRCWSAILILGFIFLASEG). The region spanning 81-135 (ETRHAECACMDLCKQHYKPVCGSDGEFYENHCEVHRAACLKKQKITIVHNEDCFF) is the Kazal-like domain. Intrachain disulfides connect cysteine 87-cysteine 119, cysteine 93-cysteine 112, and cysteine 101-cysteine 133. EF-hand domains are found at residues 175–210 (RKKP…EELN) and 211–246 (KDLS…QVIQ). The Ca(2+) site is built by aspartate 188, aspartate 190, asparagine 192, glutamate 199, aspartate 226, asparagine 228, aspartate 230, histidine 232, and glutamate 237. Ig-like domains are found at residues 250 to 338 (PEDQ…FQVN) and 341 to 426 (PVIR…EDIS). Intrachain disulfides connect cysteine 270–cysteine 321 and cysteine 362–cysteine 413. Asparagine 318 and asparagine 394 each carry an N-linked (GlcNAc...) asparagine glycan.

It localises to the secreted. The protein is Follistatin-related protein 5 (Fstl5) of Mus musculus (Mouse).